We begin with the raw amino-acid sequence, 388 residues long: Chalcone synthase (388 aa).

Cys-164 is a catalytic residue.

Belongs to the thiolase-like superfamily. Chalcone/stilbene synthases family.

It catalyses the reaction (E)-4-coumaroyl-CoA + 3 malonyl-CoA + 3 H(+) = 2',4,4',6'-tetrahydroxychalcone + 3 CO2 + 4 CoA. It functions in the pathway secondary metabolite biosynthesis; flavonoid biosynthesis. The primary product of this enzyme is 4,2',4',6'-tetrahydroxychalcone (also termed naringenin-chalcone or chalcone) which can under specific conditions spontaneously isomerize into naringenin. The polypeptide is Chalcone synthase (CHS) (Vigna unguiculata (Cowpea)).